Consider the following 537-residue polypeptide: MVHFIFVTGGVVSSLGKGLTAASLAMLLQAKGFRVSVRKLDPYLNIDPGTMNPHEHGEVYVTDDGAETDLDLGHYERFTGVSACKFDSITTGAIYSKLLKDERLGNYAGVTVQVIPHVTNIIKDFILSNTKGFDFIICEIGGTVGDIEGLPFFEAIRQIGNKLKSENCLFIHLTLLPYVKTARELKIKPTQHSVKALRAIGISPNILVCRAERNISKGEIDKISLLCNIESEYVVPAIDQKNIYLVPIAYHNSGLDNKVLKFFNINIMPSKLDKWHDIINRLKDSNSKVRIAIIAKYHKLKDAYKSVIEALDHAGIYYKYKIDLVWINAENLTEENINKKLLDIDGILVPGGFGERATKGTIIAIKYARTNNIPFFGICFGMQLATIEIAQNLIGIKDAVTEEFKVDGTKIIEKINKNCEDSKITIENVKKTMRLGSYPCSLVASTIAANAYKSLEINERHRHRYKFNNEFQNIFEKHGIVFSGFSKDEEIVEIIELPLLRWFVGVQFHPEFKSKPFEAHPLFIQFIKAAIEYNKCN.

Positions 1–265 (MVHFIFVTGG…DNKVLKFFNI (265 aa)) are amidoligase domain. Ser13 serves as a coordination point for CTP. Ser13 is a binding site for UTP. ATP contacts are provided by residues 14-19 (SLGKGL) and Asp71. 2 residues coordinate Mg(2+): Asp71 and Glu139. Residues 146–148 (DIE) and Lys222 each bind CTP. Residue Lys222 participates in UTP binding. In terms of domain architecture, Glutamine amidotransferase type-1 spans 290–536 (RIAIIAKYHK…IKAAIEYNKC (247 aa)). Residue Gly352 participates in L-glutamine binding. The active-site Nucleophile; for glutamine hydrolysis is the Cys379. L-glutamine contacts are provided by residues 380–383 (FGMQ), Glu403, and Arg464. Catalysis depends on residues His509 and Glu511.

This sequence belongs to the CTP synthase family. In terms of assembly, homotetramer.

It catalyses the reaction UTP + L-glutamine + ATP + H2O = CTP + L-glutamate + ADP + phosphate + 2 H(+). The catalysed reaction is L-glutamine + H2O = L-glutamate + NH4(+). The enzyme catalyses UTP + NH4(+) + ATP = CTP + ADP + phosphate + 2 H(+). Its pathway is pyrimidine metabolism; CTP biosynthesis via de novo pathway; CTP from UDP: step 2/2. Its activity is regulated as follows. Allosterically activated by GTP, when glutamine is the substrate; GTP has no effect on the reaction when ammonia is the substrate. The allosteric effector GTP functions by stabilizing the protein conformation that binds the tetrahedral intermediate(s) formed during glutamine hydrolysis. Inhibited by the product CTP, via allosteric rather than competitive inhibition. In terms of biological role, catalyzes the ATP-dependent amination of UTP to CTP with either L-glutamine or ammonia as the source of nitrogen. Regulates intracellular CTP levels through interactions with the four ribonucleotide triphosphates. This Rickettsia conorii (strain ATCC VR-613 / Malish 7) protein is CTP synthase.